A 1408-amino-acid chain; its full sequence is DNA-directed RNA polymerase subunit beta'' (1408 aa).

Belongs to the RNA polymerase beta' chain family. RpoC2 subfamily. In terms of assembly, in plastids the minimal PEP RNA polymerase catalytic core is composed of four subunits: alpha, beta, beta', and beta''. When a (nuclear-encoded) sigma factor is associated with the core the holoenzyme is formed, which can initiate transcription.

It is found in the plastid. It localises to the chloroplast. The enzyme catalyses RNA(n) + a ribonucleoside 5'-triphosphate = RNA(n+1) + diphosphate. In terms of biological role, DNA-dependent RNA polymerase catalyzes the transcription of DNA into RNA using the four ribonucleoside triphosphates as substrates. This is DNA-directed RNA polymerase subunit beta'' from Psilotum nudum (Whisk fern).